The chain runs to 310 residues: Serine/threonine-protein kinase pim-2 (310 aa).

A Protein kinase domain is found at 30-290 (YTMGNLLGSG…LEQILQHPWM (261 aa)). Residues 36–44 (LGSGGFGSV) and lysine 59 each bind ATP. The Proton acceptor role is filled by aspartate 167.

This sequence belongs to the protein kinase superfamily. CAMK Ser/Thr protein kinase family. PIM subfamily. In terms of processing, autophosphorylated.

It carries out the reaction L-seryl-[protein] + ATP = O-phospho-L-seryl-[protein] + ADP + H(+). The catalysed reaction is L-threonyl-[protein] + ATP = O-phospho-L-threonyl-[protein] + ADP + H(+). In terms of biological role, proto-oncogene with serine/threonine kinase activity involved in cell survival and cell proliferation. In Danio rerio (Zebrafish), this protein is Serine/threonine-protein kinase pim-2 (pim2).